Here is a 167-residue protein sequence, read N- to C-terminus: CGG triplet repeat-binding protein 1 (167 aa).

Residue Ser-56 is modified to Phosphoserine. The Nuclear localization signal motif lies at 80-84 (RKKQR). Residue Ser-164 is modified to Phosphoserine.

Ubiquitous. Highly expressed in placenta, thymus, lymph nodes, cerebellum and cerebral cortex. Low expression in other regions of the brain.

The protein resides in the nucleus. In terms of biological role, binds to nonmethylated 5'-d(CGG)(n)-3' trinucleotide repeats in the FMR1 promoter. May play a role in regulating FMR1 promoter. This is CGG triplet repeat-binding protein 1 (CGGBP1) from Homo sapiens (Human).